A 677-amino-acid chain; its full sequence is Protein asunder (677 aa).

Positions 515–540 form a coiled coil; it reads RLKLSKAKDQYRLLYRELEQLIQLNS. Positions 578–598 are enriched in low complexity; that stretch reads ESPLSPERLEPTSSSSSNSLL. Residues 578-604 form a disordered region; sequence ESPLSPERLEPTSSSSSNSLLKARKRR. Positions 598–604 match the Nuclear localization signal (NLS) motif; sequence LKARKRR.

The protein belongs to the Integrator subunit 13 family. As to quaternary structure, belongs to the multiprotein complex Integrator, at least composed of IntS1, IntS2, IntS3, IntS4, omd/IntS5, IntS6, defl/IntS7, IntS8, IntS9, IntS10, IntS11, IntS12, asun/IntS13, IntS14 and IntS15. The core complex associates with protein phosphatase 2A subunits mts/PP2A and Pp2A-29B, to form the Integrator-PP2A (INTAC) complex. In terms of processing, phosphorylated.

The protein resides in the nucleus. The protein localises to the cytoplasm. It localises to the perinuclear region. In terms of biological role, component of the integrator complex, a multiprotein complex that terminates RNA polymerase II (Pol II) transcription in the promoter-proximal region of genes. The integrator complex provides a quality checkpoint during transcription elongation by driving premature transcription termination of transcripts that are unfavorably configured for transcriptional elongation: the complex terminates transcription by (1) catalyzing dephosphorylation of the C-terminal domain (CTD) of Pol II subunit Polr2A/Rbp1 and Spt5, and (2) degrading the exiting nascent RNA transcript via endonuclease activity. The integrator complex is also involved in the 3'-end processing of the U7 snRNA, and also the spliceosomal snRNAs U1, U2, U4 and U5. The polypeptide is Protein asunder (asun) (Drosophila willistoni (Fruit fly)).